Reading from the N-terminus, the 424-residue chain is Arginine biosynthesis bifunctional protein ArgJ (424 aa).

6 residues coordinate substrate: Thr-166, Lys-192, Thr-203, Glu-290, Asn-419, and Thr-424. Thr-203 functions as the Nucleophile in the catalytic mechanism.

This sequence belongs to the ArgJ family. As to quaternary structure, heterotetramer of two alpha and two beta chains.

The protein resides in the cytoplasm. It catalyses the reaction N(2)-acetyl-L-ornithine + L-glutamate = N-acetyl-L-glutamate + L-ornithine. It carries out the reaction L-glutamate + acetyl-CoA = N-acetyl-L-glutamate + CoA + H(+). It functions in the pathway amino-acid biosynthesis; L-arginine biosynthesis; L-ornithine and N-acetyl-L-glutamate from L-glutamate and N(2)-acetyl-L-ornithine (cyclic): step 1/1. Its pathway is amino-acid biosynthesis; L-arginine biosynthesis; N(2)-acetyl-L-ornithine from L-glutamate: step 1/4. In terms of biological role, catalyzes two activities which are involved in the cyclic version of arginine biosynthesis: the synthesis of N-acetylglutamate from glutamate and acetyl-CoA as the acetyl donor, and of ornithine by transacetylation between N(2)-acetylornithine and glutamate. The sequence is that of Arginine biosynthesis bifunctional protein ArgJ from Colwellia psychrerythraea (strain 34H / ATCC BAA-681) (Vibrio psychroerythus).